The sequence spans 350 residues: Probable V-type proton ATPase subunit d 2 (350 aa).

This sequence belongs to the V-ATPase V0D/AC39 subunit family. V-ATPase is a heteromultimeric enzyme made up of two complexes: the ATP-hydrolytic V1 complex and the proton translocation V0 complex. The V1 complex consists of three catalytic AB heterodimers that form a heterohexamer, three peripheral stalks each consisting of EG heterodimers, one central rotor including subunits D and F, and the regulatory subunits C and H. The proton translocation complex V0 consists of the proton transport subunit a, a ring of proteolipid subunits c9c'', rotary subunit d, subunits e and f, and the accessory subunits VhaAC45 and ATP6AP2.

Its function is as follows. Subunit of the V0 complex of vacuolar(H+)-ATPase (V-ATPase), a multisubunit enzyme composed of a peripheral complex (V1) that hydrolyzes ATP and a membrane integral complex (V0) that translocates protons. V-ATPase is responsible for acidifying and maintaining the pH of intracellular compartments and in some cell types, is targeted to the plasma membrane, where it is responsible for acidifying the extracellular environment. May play a role in coupling of proton transport and ATP hydrolysis. The sequence is that of Probable V-type proton ATPase subunit d 2 (VhaAC39-2) from Drosophila melanogaster (Fruit fly).